The following is a 115-amino-acid chain: Large ribosomal subunit protein bL19 (115 aa).

The protein belongs to the bacterial ribosomal protein bL19 family.

In terms of biological role, this protein is located at the 30S-50S ribosomal subunit interface and may play a role in the structure and function of the aminoacyl-tRNA binding site. The protein is Large ribosomal subunit protein bL19 of Streptococcus gordonii (strain Challis / ATCC 35105 / BCRC 15272 / CH1 / DL1 / V288).